Reading from the N-terminus, the 82-residue chain is Transcription elongation factor 1 homolog (82 aa).

Zn(2+)-binding residues include cysteine 26, cysteine 29, cysteine 50, and cysteine 53.

It belongs to the ELOF1 family.

Its subcellular location is the nucleus. In terms of biological role, transcription elongation factor implicated in the maintenance of proper chromatin structure in actively transcribed regions. This Drosophila melanogaster (Fruit fly) protein is Transcription elongation factor 1 homolog.